We begin with the raw amino-acid sequence, 95 residues long: Exodeoxyribonuclease 7 small subunit (95 aa).

Positions 62–83 are enriched in basic and acidic residues; sequence LTKDESKKTNKTGFRGESKTTE. The tract at residues 62–95 is disordered; the sequence is LTKDESKKTNKTGFRGESKTTETKNNTAQEEDLF.

It belongs to the XseB family. In terms of assembly, heterooligomer composed of large and small subunits.

The protein localises to the cytoplasm. The catalysed reaction is Exonucleolytic cleavage in either 5'- to 3'- or 3'- to 5'-direction to yield nucleoside 5'-phosphates.. In terms of biological role, bidirectionally degrades single-stranded DNA into large acid-insoluble oligonucleotides, which are then degraded further into small acid-soluble oligonucleotides. The polypeptide is Exodeoxyribonuclease 7 small subunit (Leptospira interrogans serogroup Icterohaemorrhagiae serovar copenhageni (strain Fiocruz L1-130)).